The chain runs to 341 residues: L-threonine 3-dehydrogenase (341 aa).

Position 38 (C38) interacts with Zn(2+). Active-site charge relay system residues include T40 and H43. Residues H63, E64, C93, C96, C99, and C107 each contribute to the Zn(2+) site. NAD(+) contacts are provided by residues I175, D195, R200, 262 to 264 (LGI), and 286 to 287 (IY).

The protein belongs to the zinc-containing alcohol dehydrogenase family. As to quaternary structure, homotetramer. Requires Zn(2+) as cofactor.

Its subcellular location is the cytoplasm. It catalyses the reaction L-threonine + NAD(+) = (2S)-2-amino-3-oxobutanoate + NADH + H(+). Its pathway is amino-acid degradation; L-threonine degradation via oxydo-reductase pathway; glycine from L-threonine: step 1/2. Catalyzes the NAD(+)-dependent oxidation of L-threonine to 2-amino-3-ketobutyrate. This Salmonella arizonae (strain ATCC BAA-731 / CDC346-86 / RSK2980) protein is L-threonine 3-dehydrogenase.